The sequence spans 660 residues: Glycogen debranching enzyme (660 aa).

Asp-338 acts as the Nucleophile in catalysis. Residue Glu-373 is the Proton donor of the active site. The span at 460–472 shows a compositional bias: basic and acidic residues; it reads NEANGEDNRDGAW. The disordered stretch occupies residues 460 to 482; the sequence is NEANGEDNRDGAWENHSNNHGYE.

The protein belongs to the glycosyl hydrolase 13 family.

It catalyses the reaction Hydrolysis of (1-&gt;6)-alpha-D-glucosidic linkages to branches with degrees of polymerization of three or four glucose residues in limit dextrin.. It functions in the pathway glycan degradation; glycogen degradation. Functionally, removes maltotriose and maltotetraose chains that are attached by 1,6-alpha-linkage to the limit dextrin main chain, generating a debranched limit dextrin. The sequence is that of Glycogen debranching enzyme from Cronobacter sakazakii (strain ATCC BAA-894) (Enterobacter sakazakii).